Reading from the N-terminus, the 225-residue chain is Alpha-tubulin N-acetyltransferase 1 (225 aa).

Residues 1–190 (MEFPFDVDAL…NNFVIFEGFF (190 aa)) enclose the N-acetyltransferase domain. Lys-56 carries the post-translational modification N6-acetyllysine; by autocatalysis. 124 to 137 (FYIHESLQRHGHGR) serves as a coordination point for acetyl-CoA. An N6-acetyllysine; by autocatalysis modification is found at Lys-146. Residue 160-169 (SQKLLKFLNK) participates in acetyl-CoA binding. A disordered region spans residues 195–225 (PPARKLPPKRAEGDIKPYSSSDRESGLPQGW). Positions 203–219 (KRAEGDIKPYSSSDRES) are enriched in basic and acidic residues. The residue at position 210 (Lys-210) is an N6-acetyllysine; by autocatalysis.

It belongs to the acetyltransferase ATAT1 family. Component of the BBSome complex. Interacts with AP2 alpha-adaptins, including AP2A2, but not with AP1 gamma-adaptin (AP1G1/AP1G2); this interaction is required for efficient alpha-tubulin acetylation, hence clathrin-coated pits are sites of microtubule acetylation. Autoacetylation strongly increases tubulin acetylation.

The protein resides in the cytoplasm. It is found in the membrane. The protein localises to the clathrin-coated pit. Its subcellular location is the cell junction. It localises to the focal adhesion. The protein resides in the cell projection. It is found in the axon. The protein localises to the cytoskeleton. Its subcellular location is the spindle. It carries out the reaction L-lysyl-[alpha-tubulin] + acetyl-CoA = N(6)-acetyl-L-lysyl-[alpha-tubulin] + CoA + H(+). Specifically acetylates 'Lys-40' in alpha-tubulin on the lumenal side of microtubules. Promotes microtubule destabilization and accelerates microtubule dynamics; this activity may be independent of acetylation activity. Acetylates alpha-tubulin with a slow enzymatic rate, due to a catalytic site that is not optimized for acetyl transfer. Enters the microtubule through each end and diffuses quickly throughout the lumen of microtubules. Acetylates only long/old microtubules because of its slow acetylation rate since it does not have time to act on dynamically unstable microtubules before the enzyme is released. Required for normal sperm flagellar function. Promotes directional cell locomotion and chemotaxis, through AP2A2-dependent acetylation of alpha-tubulin at clathrin-coated pits that are concentrated at the leading edge of migrating cells. May facilitate primary cilium assembly. The protein is Alpha-tubulin N-acetyltransferase 1 of Bos taurus (Bovine).